The chain runs to 436 residues: 3-phosphoshikimate 1-carboxyvinyltransferase (436 aa).

3-phosphoshikimate contacts are provided by K23, S24, and R28. K23 lines the phosphoenolpyruvate pocket. Positions 97 and 126 each coordinate phosphoenolpyruvate. Residues S171, Q173, D323, and K350 each coordinate 3-phosphoshikimate. Phosphoenolpyruvate is bound at residue Q173. Catalysis depends on D323, which acts as the Proton acceptor. Phosphoenolpyruvate-binding residues include R354 and R396.

The protein belongs to the EPSP synthase family. As to quaternary structure, monomer.

Its subcellular location is the cytoplasm. The enzyme catalyses 3-phosphoshikimate + phosphoenolpyruvate = 5-O-(1-carboxyvinyl)-3-phosphoshikimate + phosphate. It participates in metabolic intermediate biosynthesis; chorismate biosynthesis; chorismate from D-erythrose 4-phosphate and phosphoenolpyruvate: step 6/7. Its function is as follows. Catalyzes the transfer of the enolpyruvyl moiety of phosphoenolpyruvate (PEP) to the 5-hydroxyl of shikimate-3-phosphate (S3P) to produce enolpyruvyl shikimate-3-phosphate and inorganic phosphate. The chain is 3-phosphoshikimate 1-carboxyvinyltransferase from Prochlorococcus marinus (strain MIT 9301).